The sequence spans 337 residues: Tetraacyldisaccharide 4'-kinase (337 aa).

An ATP-binding site is contributed by 56–63; that stretch reads VAGGAGKT.

It belongs to the LpxK family.

It catalyses the reaction a lipid A disaccharide + ATP = a lipid IVA + ADP + H(+). Its pathway is glycolipid biosynthesis; lipid IV(A) biosynthesis; lipid IV(A) from (3R)-3-hydroxytetradecanoyl-[acyl-carrier-protein] and UDP-N-acetyl-alpha-D-glucosamine: step 6/6. Its function is as follows. Transfers the gamma-phosphate of ATP to the 4'-position of a tetraacyldisaccharide 1-phosphate intermediate (termed DS-1-P) to form tetraacyldisaccharide 1,4'-bis-phosphate (lipid IVA). This Rhodospirillum centenum (strain ATCC 51521 / SW) protein is Tetraacyldisaccharide 4'-kinase.